The sequence spans 397 residues: Mannonate dehydratase 2 (397 aa).

The protein belongs to the mannonate dehydratase family. Fe(2+) serves as cofactor. It depends on Mn(2+) as a cofactor.

It catalyses the reaction D-mannonate = 2-dehydro-3-deoxy-D-gluconate + H2O. It participates in carbohydrate metabolism; pentose and glucuronate interconversion. Functionally, catalyzes the dehydration of D-mannonate. This Agrobacterium fabrum (strain C58 / ATCC 33970) (Agrobacterium tumefaciens (strain C58)) protein is Mannonate dehydratase 2 (uxuA2).